The chain runs to 473 residues: Glycogen synthase (473 aa).

Lysine 15 is a binding site for ADP-alpha-D-glucose.

The protein belongs to the glycosyltransferase 1 family. Bacterial/plant glycogen synthase subfamily.

The enzyme catalyses [(1-&gt;4)-alpha-D-glucosyl](n) + ADP-alpha-D-glucose = [(1-&gt;4)-alpha-D-glucosyl](n+1) + ADP + H(+). It participates in glycan biosynthesis; glycogen biosynthesis. Its function is as follows. Synthesizes alpha-1,4-glucan chains using ADP-glucose. The polypeptide is Glycogen synthase (Flavobacterium johnsoniae (strain ATCC 17061 / DSM 2064 / JCM 8514 / BCRC 14874 / CCUG 350202 / NBRC 14942 / NCIMB 11054 / UW101) (Cytophaga johnsonae)).